A 225-amino-acid polypeptide reads, in one-letter code: Large ribosomal subunit protein bL25 (225 aa).

The tract at residues 197 to 225 (PQREEQMEDTDTAAADEEGDKEEDADKQE) is disordered. A compositionally biased stretch (acidic residues) spans 202–225 (QMEDTDTAAADEEGDKEEDADKQE).

It belongs to the bacterial ribosomal protein bL25 family. CTC subfamily. As to quaternary structure, part of the 50S ribosomal subunit; part of the 5S rRNA/L5/L18/L25 subcomplex. Contacts the 5S rRNA. Binds to the 5S rRNA independently of L5 and L18.

Functionally, this is one of the proteins that binds to the 5S RNA in the ribosome where it forms part of the central protuberance. The chain is Large ribosomal subunit protein bL25 from Dichelobacter nodosus (strain VCS1703A).